Reading from the N-terminus, the 214-residue chain is uncharacterized protein (214 aa).

4 consecutive transmembrane segments (helical) span residues 10–30 (IPPL…SLGI), 55–75 (IGVG…GYAI), 147–167 (VSGA…AGMA), and 174–194 (RFSW…AILL).

This sequence belongs to the DedA family.

It is found in the cell membrane. This is an uncharacterized protein from Mycobacterium leprae (strain TN).